Here is a 236-residue protein sequence, read N- to C-terminus: Mediator of RNA polymerase II transcription subunit 20 (236 aa).

The protein belongs to the Mediator complex subunit 20 family. Component of the Mediator complex.

It is found in the nucleus. Component of the Mediator complex, a coactivator involved in the regulated transcription of nearly all RNA polymerase II-dependent genes. Mediator functions as a bridge to convey information from gene-specific regulatory proteins to the basal RNA polymerase II transcription machinery. Mediator is recruited to promoters by direct interactions with regulatory proteins and serves as a scaffold for the assembly of a functional preinitiation complex with RNA polymerase II and the general transcription factors. The chain is Mediator of RNA polymerase II transcription subunit 20 (SRB2) from Debaryomyces hansenii (strain ATCC 36239 / CBS 767 / BCRC 21394 / JCM 1990 / NBRC 0083 / IGC 2968) (Yeast).